A 340-amino-acid polypeptide reads, in one-letter code: Dihydroorotate dehydrogenase (quinone) (340 aa).

Residues 62–66 and Thr86 contribute to the FMN site; that span reads AGLDK. Residue Lys66 coordinates substrate. 111–115 provides a ligand contact to substrate; it reads NRMGF. FMN-binding residues include Asn139 and Asn172. Asn172 provides a ligand contact to substrate. Ser175 serves as the catalytic Nucleophile. Substrate is bound at residue Asn177. The FMN site is built by Lys217 and Thr245. Residue 246–247 coordinates substrate; it reads NT. Residues Gly268, Gly297, and 318-319 contribute to the FMN site; that span reads YS.

It belongs to the dihydroorotate dehydrogenase family. Type 2 subfamily. Monomer. Requires FMN as cofactor.

The protein resides in the cell membrane. The enzyme catalyses (S)-dihydroorotate + a quinone = orotate + a quinol. Its pathway is pyrimidine metabolism; UMP biosynthesis via de novo pathway; orotate from (S)-dihydroorotate (quinone route): step 1/1. Functionally, catalyzes the conversion of dihydroorotate to orotate with quinone as electron acceptor. The chain is Dihydroorotate dehydrogenase (quinone) from Alkalilimnicola ehrlichii (strain ATCC BAA-1101 / DSM 17681 / MLHE-1).